Here is a 342-residue protein sequence, read N- to C-terminus: Ribosomal RNA small subunit methyltransferase C (342 aa).

The protein belongs to the methyltransferase superfamily. RsmC family. In terms of assembly, monomer.

The protein localises to the cytoplasm. It catalyses the reaction guanosine(1207) in 16S rRNA + S-adenosyl-L-methionine = N(2)-methylguanosine(1207) in 16S rRNA + S-adenosyl-L-homocysteine + H(+). Functionally, specifically methylates the guanine in position 1207 of 16S rRNA in the 30S particle. This chain is Ribosomal RNA small subunit methyltransferase C, found in Salmonella heidelberg (strain SL476).